A 250-amino-acid chain; its full sequence is Ribonuclease HII (250 aa).

The RNase H type-2 domain occupies 66 to 250; that stretch reads QLVAGVDEVG…TFAPVSDFFK (185 aa). A divalent metal cation contacts are provided by aspartate 72, glutamate 73, and aspartate 164.

Belongs to the RNase HII family. The cofactor is Mn(2+). It depends on Mg(2+) as a cofactor.

Its subcellular location is the cytoplasm. It carries out the reaction Endonucleolytic cleavage to 5'-phosphomonoester.. Its function is as follows. Endonuclease that specifically degrades the RNA of RNA-DNA hybrids. This chain is Ribonuclease HII, found in Lactobacillus acidophilus (strain ATCC 700396 / NCK56 / N2 / NCFM).